A 1687-amino-acid polypeptide reads, in one-letter code: Gag-Pol polyprotein (1687 aa).

Gly-2 carries the N-myristoyl glycine; by host lipid modification. Disordered regions lie at residues 106 to 197 (SSPE…VILP) and 420 to 490 (HKRE…LDKD). A PTAP/PSAP motif motif is present at residues 108-111 (PENT). Over residues 139-157 (EPPPYPAALPPPLAPPAVG) the composition is skewed to pro residues. A PPXY motif motif is present at residues 140–143 (PPPY). Residues 408 to 455 (LQDLVREAEKVYHKRETEEERQEREKKEAEERERRRDRRQEKNLTRIL) are a coiled coil. Basic and acidic residues-rich tracts occupy residues 420–451 (HKRETEEERQEREKKEAEERERRRDRRQEKNL) and 479–490 (TPRDGRPPLDKD). The CCHC-type zinc finger occupies 490-507 (DQCAYCKEKGHWARECPQ). A Peptidase A2 domain is found at 544–614 (IEFLVDTGAE…CPAPLLGRDL (71 aa)). Asp-549 (protease; shared with dimeric partner) is an active-site residue. In terms of domain architecture, Reverse transcriptase spans 721–912 (LDLGVLVPCQ…KEVTYLGYLL (192 aa)). Positions 789, 863, 864, 1180, 1200, 1221, and 1291 each coordinate Mg(2+). The RNase H type-1 domain occupies 1153–1299 (LPGVPAWYTD…ADEAAKQAAL (147 aa)). The segment at 1339–1377 (HQLTHLGPEKLLQLVNRTSLLIPNLQSAVREVTSQCQAC) adopts an HHCC-type zinc-finger fold. The Integrase catalytic domain maps to 1394–1552 (RGDRPGVYWE…TPYEILYGGP (159 aa)). Asp-1405 and Asp-1464 together coordinate Mg(2+).

It belongs to the retroviral Pol polyprotein family. In terms of assembly, homohexamer; further associates as homomultimer. The virus core is composed of a lattice formed from hexagonal rings, each containing six capsid monomers. As to quaternary structure, interacts (via PPXY motif) with host NEDD4. Interacts (via PSAP motif) with host TSG101. The reverse transcriptase is a monomer (Potential). Interacts (via RNase domains) with host release factor ETF1; this interaction is essential for translational readthrough of amber codon between viral gag and pol genes, as well as for viral replication. In terms of assembly, homodimer. Mg(2+) serves as cofactor. Post-translationally, specific enzymatic cleavages by the viral protease yield mature proteins. The protease is released by autocatalytic cleavage. The polyprotein is cleaved during and after budding, this process is termed maturation. Phosphorylated on serine residues.

It is found in the virion. Its subcellular location is the host cell membrane. The protein resides in the host late endosome membrane. It localises to the host endosome. The protein localises to the host multivesicular body. It is found in the host cytoplasm. It catalyses the reaction DNA(n) + a 2'-deoxyribonucleoside 5'-triphosphate = DNA(n+1) + diphosphate. It carries out the reaction Endonucleolytic cleavage to 5'-phosphomonoester.. Most efficiently inhibited by Amprenavir, which is able to block Gag-Pol processing in infected cells. Functionally, plays a role in budding and is processed by the viral protease during virion maturation outside the cell. During budding, it recruits, in a PPXY-dependent or independent manner, Nedd4-like ubiquitin ligases that conjugate ubiquitin molecules to Gag-Pol, or to Gag-Pol binding host factors. Interaction with HECT ubiquitin ligases probably links the viral protein to the host ESCRT pathway and facilitates release. Targets Gag and gag-pol polyproteins to the plasma membrane via a multipartite membrane binding signal, that includes its myristoylated N-terminus. Also mediates nuclear localization of the pre-integration complex. Its function is as follows. Constituent of the pre-integration complex (PIC) which tethers the latter to mitotic chromosomes. This allows the integration of the viral genome into the host DNA. In terms of biological role, forms the spherical core of the virion that encapsulates the genomic RNA-nucleocapsid complex. Functionally, involved in the packaging and encapsidation of two copies of the genome. Binds with high affinity to conserved UCUG elements within the packaging signal, located near the 5'-end of the genome. This binding is dependent on genome dimerization. Acts as a nucleic acid chaperone which is involved in rearrangement of nucleic acid secondary structures during gRNA retrotranscription. The aspartyl protease mediates proteolytic cleavages of Gag and Gag-Pol polyproteins during or shortly after the release of the virion from the plasma membrane. Cleavages take place as an ordered, step-wise cascade to yield mature proteins. This process is called maturation. Displays maximal activity during the budding process just prior to particle release from the cell. Its function is as follows. RT is a multifunctional enzyme that converts the viral dimeric RNA genome into dsDNA in the cytoplasm, shortly after virus entry into the cell. This enzyme displays a DNA polymerase activity that can copy either DNA or RNA templates, and a ribonuclease H (RNase H) activity that cleaves the RNA strand of RNA-DNA heteroduplexes in a partially processive 3' to 5' endonucleasic mode. Conversion of viral genomic RNA into dsDNA requires many steps. A tRNA binds to the primer-binding site (PBS) situated at the 5' end of the viral RNA. RT uses the 3' end of the tRNA primer to perform a short round of RNA-dependent minus-strand DNA synthesis. The reading proceeds through the U5 region and ends after the repeated (R) region which is present at both ends of viral RNA. The portion of the RNA-DNA heteroduplex is digested by the RNase H, resulting in a ssDNA product attached to the tRNA primer. This ssDNA/tRNA hybridizes with the identical R region situated at the 3' end of viral RNA. This template exchange, known as minus-strand DNA strong stop transfer, can be either intra- or intermolecular. RT uses the 3' end of this newly synthesized short ssDNA to perform the RNA-dependent minus-strand DNA synthesis of the whole template. RNase H digests the RNA template except for a polypurine tract (PPT) situated at the 5' end of the genome. It is not clear if both polymerase and RNase H activities are simultaneous. RNase H probably can proceed both in a polymerase-dependent (RNA cut into small fragments by the same RT performing DNA synthesis) and a polymerase-independent mode (cleavage of remaining RNA fragments by free RTs). Secondly, RT performs DNA-directed plus-strand DNA synthesis using the PPT that has not been removed by RNase H as primers. PPT and tRNA primers are then removed by RNase H. The 3' and 5' ssDNA PBS regions hybridize to form a circular dsDNA intermediate. Strand displacement synthesis by RT to the PBS and PPT ends produces a blunt ended, linear dsDNA copy of the viral genome that includes long terminal repeats (LTRs) at both ends. In terms of biological role, catalyzes viral DNA integration into the host chromosome, by performing a series of DNA cutting and joining reactions. This enzyme activity takes place after virion entry into a cell and reverse transcription of the RNA genome in dsDNA. The first step in the integration process is 3' processing. This step requires a complex comprising the viral genome, matrix protein and integrase. This complex is called the pre-integration complex (PIC). The integrase protein removes 2 nucleotides from each 3' end of the viral DNA, leaving recessed CA OH's at the 3' ends. In the second step that requires cell division, the PIC enters cell nucleus. In the third step, termed strand transfer, the integrase protein joins the previously processed 3' ends to the 5' ends of strands of target cellular DNA at the site of integration. The last step is viral DNA integration into host chromosome. This chain is Gag-Pol polyprotein (pol), found in Woolly monkey sarcoma virus (WMSV).